A 407-amino-acid polypeptide reads, in one-letter code: Deacetylase Atu3266 (407 aa).

Positions 75, 77, 173, 206, 229, and 289 each coordinate Zn(2+). Position 173 is an N6-carboxylysine (Lys-173).

It belongs to the metallo-dependent hydrolases superfamily. Atu3266/EF_0837 deacetylase family. Homohexamer, dimer of trimers. The cofactor is Zn(2+).

Esterase that catalyzes the deacetylation of acetyl-(R)-mandelate (in vitro). Can also hydrolyze acetyl glycolate, but with lower efficiency. Has very low N-acetyl-D-amino acid deacetylase activity with N-acetyl-D-serine and N-acetyl-D-threonine (in vitro). Theoretical substrate docking studies suggest that other N-acetylated amino acids may optimally occupy the active site and may in fact be the physiological substrates. This chain is Deacetylase Atu3266, found in Agrobacterium fabrum (strain C58 / ATCC 33970) (Agrobacterium tumefaciens (strain C58)).